We begin with the raw amino-acid sequence, 250 residues long: Aquaporin TIP2-2 (250 aa).

2 consecutive transmembrane segments (helical) span residues 22–42 (VAEF…AIAF) and 54–74 (AGLV…VSVA). An NPA 1 motif is present at residues 83 to 85 (NPA). 3 helical membrane-spanning segments follow: residues 97–119 (TVLT…CLLL), 142–162 (GVVF…ATAA), and 169–189 (LGTI…LAAG). Positions 197–199 (NPA) match the NPA 2 motif. The helical transmembrane segment at 218–238 (WVGPLIGGGLAGLVYGDVFIG) threads the bilayer.

Belongs to the MIP/aquaporin (TC 1.A.8) family. TIP (TC 1.A.8.10) subfamily.

Its subcellular location is the vacuole membrane. Its function is as follows. Aquaporins facilitate the transport of water and small neutral solutes across cell membranes. The protein is Aquaporin TIP2-2 (TIP2-2) of Zea mays (Maize).